The primary structure comprises 192 residues: Shikimate kinase (192 aa).

27–32 (GTGKTT) is a binding site for ATP. Residue threonine 31 coordinates Mg(2+). Substrate is bound by residues aspartate 49, arginine 73, and glycine 95. Arginine 133 is an ATP binding site. Arginine 152 provides a ligand contact to substrate.

Belongs to the shikimate kinase family. In terms of assembly, monomer. Mg(2+) is required as a cofactor.

It is found in the cytoplasm. It carries out the reaction shikimate + ATP = 3-phosphoshikimate + ADP + H(+). Its pathway is metabolic intermediate biosynthesis; chorismate biosynthesis; chorismate from D-erythrose 4-phosphate and phosphoenolpyruvate: step 5/7. In terms of biological role, catalyzes the specific phosphorylation of the 3-hydroxyl group of shikimic acid using ATP as a cosubstrate. The sequence is that of Shikimate kinase from Hahella chejuensis (strain KCTC 2396).